Consider the following 375-residue polypeptide: Trans-enoyl reductase BOA5 (375 aa).

The span at 1 to 16 shows a compositional bias: polar residues; that stretch reads MQAVIQTGPGTLQLTE. Positions 1–21 are disordered; that stretch reads MQAVIQTGPGTLQLTENVPKP. Position 42-45 (42-45) interacts with NADP(+); that stretch reads SDWK. 121–128 contributes to the substrate binding site; the sequence is VGIVTTGL. The interval 147–168 is disordered; sequence GSAAPQKTRVGPRGWSGGDALT. NADP(+) is bound by residues 185 to 188, 208 to 211, Tyr226, and 273 to 274; these read STST, SPHN, and LD. 294 to 298 is a binding site for substrate; that stretch reads ALTIF. An NADP(+)-binding site is contributed by 363–364; it reads VS.

Belongs to the zinc-containing alcohol dehydrogenase family. As to quaternary structure, monomer.

The protein operates within polyketide biosynthesis. Trans-enoyl reductase; part of the gene cluster A that mediates the biosynthesis of botcinic acid and its botcinin derivatives, acetate-derived polyketides that contribute to virulence when combined with the sesquiterpene botrydial. Botcinic acid and its derivatives have been shown to induce chlorosis and necrosis during host plant infection, but also have antifungal activities. Two polyketide synthases, BOA6 and BOA9, are involved in the biosynthesis of botcinins. BOA6 mediates the formation of the per-methylated tetraketide core by condensation of four units of malonyl-CoA with one unit of acetyl-CoA, which would be methylated in activated methylene groups to yield a bicyclic acid intermediate that could then either be converted to botrylactone derivatives or lose the starter acetate unit through a retro-Claisen type C-C bond cleavage to yield botcinin derivatives. The second polyketide synthase, BOA9, is probably required for the biosynthesis of the tetraketide side chain of botcinins. The methyltransferase (MT) domain within BOA6 is probably responsible for the incorporation of four methyl groups. The trans-enoyl reductase BOA5 might take over the enoyl reductase function of BOA6 that misses an ER domain. The monooxygenases BOA2, BOA3 and BOA4 might be involved in further hydroxylations at C4, C5 and C8, whereas BOA7, close to BOA9, could potentially be involved in the hydroxylation at C4 in the side chain of botcinins. The protein is Trans-enoyl reductase BOA5 of Botryotinia fuckeliana (strain B05.10) (Noble rot fungus).